Here is a 275-residue protein sequence, read N- to C-terminus: Probable endonuclease 4 (275 aa).

Zn(2+)-binding residues include H66, H106, E140, D172, H175, H209, D222, H224, and E254.

The protein belongs to the AP endonuclease 2 family. It depends on Zn(2+) as a cofactor.

The catalysed reaction is Endonucleolytic cleavage to 5'-phosphooligonucleotide end-products.. Functionally, endonuclease IV plays a role in DNA repair. It cleaves phosphodiester bonds at apurinic or apyrimidinic (AP) sites, generating a 3'-hydroxyl group and a 5'-terminal sugar phosphate. The sequence is that of Probable endonuclease 4 from Halobacterium salinarum (strain ATCC 29341 / DSM 671 / R1).